We begin with the raw amino-acid sequence, 370 residues long: NADH-quinone oxidoreductase subunit D 2 (370 aa).

The protein belongs to the complex I 49 kDa subunit family. As to quaternary structure, NDH-1 is composed of 14 different subunits. Subunits NuoB, C, D, E, F, and G constitute the peripheral sector of the complex.

The protein localises to the cell membrane. The enzyme catalyses a quinone + NADH + 5 H(+)(in) = a quinol + NAD(+) + 4 H(+)(out). In terms of biological role, NDH-1 shuttles electrons from NADH, via FMN and iron-sulfur (Fe-S) centers, to quinones in the respiratory chain. The immediate electron acceptor for the enzyme in this species is believed to be ubiquinone. Couples the redox reaction to proton translocation (for every two electrons transferred, four hydrogen ions are translocated across the cytoplasmic membrane), and thus conserves the redox energy in a proton gradient. In Herpetosiphon aurantiacus (strain ATCC 23779 / DSM 785 / 114-95), this protein is NADH-quinone oxidoreductase subunit D 2.